A 541-amino-acid chain; its full sequence is Zinc finger protein 513 (541 aa).

The tract at residues 1–118 (MPRRKQSHPQ…GEARGERPGP (118 aa)) is disordered. Acidic residues predominate over residues 44–57 (LEFEEEEEEEEGDG). Ser85 and Ser96 each carry phosphoserine. Basic and acidic residues predominate over residues 103–115 (EPARGPGEARGER). 8 consecutive C2H2-type zinc fingers follow at residues 150–172 (YSCR…MQTH), 178–200 (FRCG…TRTH), 206–228 (YRCP…QRTH), 360–382 (FACS…MKTH), 388–410 (FRCA…QRVH), 416–438 (YKCP…GRIH), 444–466 (FRCS…MLRH), and 472–494 (FRCA…QKVH). The tract at residues 492–541 (KVHGHGGAGGPGLSASEGWAPPHSPPSVLSSRGPPALGTAGSRAVHTDSS) is disordered.

Belongs to the krueppel C2H2-type zinc-finger protein family. In terms of assembly, binds DNA. Can associate with the proximal promoter regions of PAX6 and SP4, and their known targets including ARR3, RHO, OPN1MW2 and OPN1SW. As to expression, in the retina, expressed in the outer and inner nuclear layers, and the ganglion cell layer.

The protein resides in the nucleus. Functionally, transcriptional regulator that plays a role in retinal development and maintenance. The sequence is that of Zinc finger protein 513 (ZNF513) from Homo sapiens (Human).